A 265-amino-acid chain; its full sequence is MKPAMETAAEENTEQSQKRKGCFECCIKCLGGVPYASLVATILCFSGVALFCGCGHVALAGTVAILEQHFSTNASDHALLSEVIQLMQYVIYGIASFFFLYVIILLAEGFYTTSAVKELHGEFKTTACGRCISGMFVFLTYVLGVAWLGVFGFSAVPVFMFYNIWSTCEVIKSPQTNGTTGVEQICVDIRQYGIIPWNAFPGKICGSALENICNTNEFYMSYHLFIVACAGAGATVIALLIYMMATTYNYAVLKFKSREDCCTKF.

The chain crosses the membrane as a helical span at residues 31–51 (GGVPYASLVATILCFSGVALF). Residue Asn-73 is glycosylated (N-linked (GlcNAc...) asparagine). Transmembrane regions (helical) follow at residues 90–110 (VIYGIASFFFLYVIILLAEGF) and 136–156 (FVFLTYVLGVAWLGVFGFSAV). N-linked (GlcNAc...) asparagine glycosylation occurs at Asn-177. A helical transmembrane segment spans residues 224–244 (LFIVACAGAGATVIALLIYMM). Ser-257 bears the Phosphoserine mark.

The protein belongs to the myelin proteolipid protein family. Interacts with SERT.

Its subcellular location is the membrane. The protein resides in the cell membrane. In terms of biological role, may be involved in neural development. Involved in regulation of osteoblast function and bone formation. Involved in matrix vesicle release by osteoblasts; this function seems to involve maintenance of the actin cytoskeleton. May be involved in cellular trafficking of SERT and thereby in regulation of serotonin uptake. The chain is Neuronal membrane glycoprotein M6-b (GPM6B) from Pongo abelii (Sumatran orangutan).